A 580-amino-acid chain; its full sequence is Arginine--tRNA ligase (580 aa).

The short motif at 127–137 is the 'HIGH' region element; sequence PNLAKEMHVGH.

Belongs to the class-I aminoacyl-tRNA synthetase family. Monomer.

It is found in the cytoplasm. The enzyme catalyses tRNA(Arg) + L-arginine + ATP = L-arginyl-tRNA(Arg) + AMP + diphosphate. The protein is Arginine--tRNA ligase of Idiomarina loihiensis (strain ATCC BAA-735 / DSM 15497 / L2-TR).